We begin with the raw amino-acid sequence, 193 residues long: ATP-dependent Clp protease proteolytic subunit (193 aa).

The active-site Nucleophile is the Ser98. The active site involves His123.

The protein belongs to the peptidase S14 family. As to quaternary structure, fourteen ClpP subunits assemble into 2 heptameric rings which stack back to back to give a disk-like structure with a central cavity, resembling the structure of eukaryotic proteasomes.

It is found in the cytoplasm. It carries out the reaction Hydrolysis of proteins to small peptides in the presence of ATP and magnesium. alpha-casein is the usual test substrate. In the absence of ATP, only oligopeptides shorter than five residues are hydrolyzed (such as succinyl-Leu-Tyr-|-NHMec, and Leu-Tyr-Leu-|-Tyr-Trp, in which cleavage of the -Tyr-|-Leu- and -Tyr-|-Trp bonds also occurs).. Its function is as follows. Cleaves peptides in various proteins in a process that requires ATP hydrolysis. Has a chymotrypsin-like activity. Plays a major role in the degradation of misfolded proteins. The protein is ATP-dependent Clp protease proteolytic subunit of Clostridium acetobutylicum (strain ATCC 824 / DSM 792 / JCM 1419 / IAM 19013 / LMG 5710 / NBRC 13948 / NRRL B-527 / VKM B-1787 / 2291 / W).